The chain runs to 443 residues: Pentatricopeptide repeat-containing protein 6, mitochondrial (443 aa).

The N-terminal 13 residues, 1–13 (MRILGSLPNNIRK), are a transit peptide targeting the mitochondrion. PPR repeat units follow at residues 130 to 164 (NIVDYTHILRVAMYTGNKHILEYIVARVKEKRIRP) and 220 to 254 (NSTTYDYLMVGLSRDGKIREIYDLIDTVWGINENS).

It localises to the mitochondrion. In terms of biological role, mitochondrial RNA-binding protein required for the stability of the atp9 mRNA. This is Pentatricopeptide repeat-containing protein 6, mitochondrial (ppr6) from Schizosaccharomyces pombe (strain 972 / ATCC 24843) (Fission yeast).